A 538-amino-acid polypeptide reads, in one-letter code: Putative cysteine ligase BshC (538 aa).

The stretch at 419-445 (IEAKRQIQAMEQLLAEKYSELASYLEE) forms a coiled coil.

The protein belongs to the BshC family.

Functionally, involved in bacillithiol (BSH) biosynthesis. May catalyze the last step of the pathway, the addition of cysteine to glucosamine malate (GlcN-Mal) to generate BSH. The polypeptide is Putative cysteine ligase BshC (Lysinibacillus sphaericus (strain C3-41)).